Reading from the N-terminus, the 344-residue chain is Arginine N-succinyltransferase (344 aa).

Residue Leu-125 coordinates succinyl-CoA. Catalysis depends on His-229, which acts as the Proton donor.

Belongs to the arginine N-succinyltransferase family.

The enzyme catalyses succinyl-CoA + L-arginine = N(2)-succinyl-L-arginine + CoA + H(+). It functions in the pathway amino-acid degradation; L-arginine degradation via AST pathway; L-glutamate and succinate from L-arginine: step 1/5. Functionally, catalyzes the transfer of succinyl-CoA to arginine to produce N(2)-succinylarginine. This Salmonella typhi protein is Arginine N-succinyltransferase.